Here is an 810-residue protein sequence, read N- to C-terminus: Leucine--tRNA ligase (810 aa).

The short motif at 41-52 is the 'HIGH' region element; that stretch reads PYPSGQGLHVGH. A 'KMSKS' region motif is present at residues 582–586; sequence KMSKS. An ATP-binding site is contributed by Lys585.

Belongs to the class-I aminoacyl-tRNA synthetase family.

The protein localises to the cytoplasm. The enzyme catalyses tRNA(Leu) + L-leucine + ATP = L-leucyl-tRNA(Leu) + AMP + diphosphate. The protein is Leucine--tRNA ligase of Oenococcus oeni (strain ATCC BAA-331 / PSU-1).